The following is a 680-amino-acid chain: GTPase Obg (680 aa).

The Obg domain occupies 2–160; the sequence is DQFIDVVSFE…LNIRLEVKLI (159 aa). Residues 161 to 336 form the OBG-type G domain; sequence ADIGLVGMPN…LDGDMLDKVT (176 aa). Residues 167–174, 192–196, 214–217, 281–284, and 317–319 contribute to the GTP site; these read GMPNTGKS, FTTLT, DIPG, NKTD, and PEI. Ser174 and Thr194 together coordinate Mg(2+). Residues 371–680 form a radical SAM domain region; that stretch reads TKRVFGPVVS…NGVLSYAVNI (310 aa). A Radical SAM core domain is found at 383-613; the sequence is LGNSLGIDVI…IEIDVPSVSD (231 aa). 3 residues coordinate [4Fe-4S] cluster: Cys397, Cys401, and Cys404.

This sequence belongs to the TRAFAC class OBG-HflX-like GTPase superfamily. OBG GTPase family. In terms of assembly, monomer. Mg(2+) serves as cofactor. The cofactor is [4Fe-4S] cluster.

It localises to the cytoplasm. Its function is as follows. An essential GTPase which binds GTP, GDP and possibly (p)ppGpp with moderate affinity, with high nucleotide exchange rates and a fairly low GTP hydrolysis rate. Plays a role in control of the cell cycle, stress response, ribosome biogenesis and in those bacteria that undergo differentiation, in morphogenesis control. This chain is GTPase Obg, found in Brachyspira hyodysenteriae (strain ATCC 49526 / WA1).